A 320-amino-acid chain; its full sequence is Reticulocalbin-2 (320 aa).

Positions Met-1–Ala-25 are cleaved as a signal peptide. EF-hand domains are found at residues Glu-64–His-99 and Tyr-100–Asp-135. Ca(2+) is bound by residues Asp-77, Asp-79, Asp-81, Glu-88, Asp-113, Asn-115, Asp-117, and Glu-124. Thr-140 carries the post-translational modification Phosphothreonine. EF-hand domains follow at residues Phe-150 to Glu-185, Met-189 to Ala-224, Trp-230 to Gly-265, and Ile-266 to Ser-301. Ca(2+)-binding residues include Asp-167, Glu-176, Asp-202, Asn-204, Asp-206, Glu-213, Asp-243, Asp-245, Asp-247, Arg-249, Glu-254, Asp-279, Asn-281, Asp-283, Lys-285, and Glu-290. The Prevents secretion from ER motif lies at His-317–Leu-320.

Belongs to the CREC family.

It is found in the endoplasmic reticulum lumen. Functionally, not known. Binds calcium. The sequence is that of Reticulocalbin-2 (Rcn2) from Mus musculus (Mouse).